A 313-amino-acid chain; its full sequence is Biotin synthase (313 aa).

Positions 28–258 (NFGNDIELCS…LFPQARLRLS (231 aa)) constitute a Radical SAM core domain. 3 residues coordinate [4Fe-4S] cluster: C46, C50, and C53. The [2Fe-2S] cluster site is built by C90, C121, C181, and R256.

Belongs to the radical SAM superfamily. Biotin synthase family. In terms of assembly, homodimer. [4Fe-4S] cluster is required as a cofactor. Requires [2Fe-2S] cluster as cofactor.

It catalyses the reaction (4R,5S)-dethiobiotin + (sulfur carrier)-SH + 2 reduced [2Fe-2S]-[ferredoxin] + 2 S-adenosyl-L-methionine = (sulfur carrier)-H + biotin + 2 5'-deoxyadenosine + 2 L-methionine + 2 oxidized [2Fe-2S]-[ferredoxin]. The protein operates within cofactor biosynthesis; biotin biosynthesis; biotin from 7,8-diaminononanoate: step 2/2. Functionally, catalyzes the conversion of dethiobiotin (DTB) to biotin by the insertion of a sulfur atom into dethiobiotin via a radical-based mechanism. This is Biotin synthase from Francisella tularensis subsp. tularensis (strain WY96-3418).